The following is a 449-amino-acid chain: Glucose-6-phosphate isomerase (449 aa).

The Proton donor role is filled by Glu-291. Catalysis depends on residues His-312 and Lys-426.

The protein belongs to the GPI family.

The protein resides in the cytoplasm. The enzyme catalyses alpha-D-glucose 6-phosphate = beta-D-fructose 6-phosphate. The protein operates within carbohydrate biosynthesis; gluconeogenesis. It participates in carbohydrate degradation; glycolysis; D-glyceraldehyde 3-phosphate and glycerone phosphate from D-glucose: step 2/4. Its function is as follows. Catalyzes the reversible isomerization of glucose-6-phosphate to fructose-6-phosphate. The chain is Glucose-6-phosphate isomerase from Enterococcus faecalis (strain ATCC 700802 / V583).